A 169-amino-acid chain; its full sequence is Cell division inhibitor SulA (169 aa).

A ftsZ binding region spans residues 106-112; it reads ALRTGNY. The tract at residues 162–169 is lon protease binding; sequence KIHSNLYH.

The protein belongs to the SulA family. In terms of assembly, interacts with FtsZ. Post-translationally, is rapidly cleaved and degraded by the Lon protease once DNA damage is repaired.

Component of the SOS system and an inhibitor of cell division. Accumulation of SulA causes rapid cessation of cell division and the appearance of long, non-septate filaments. In the presence of GTP, binds a polymerization-competent form of FtsZ in a 1:1 ratio, thus inhibiting FtsZ polymerization and therefore preventing it from participating in the assembly of the Z ring. This mechanism prevents the premature segregation of damaged DNA to daughter cells during cell division. This chain is Cell division inhibitor SulA, found in Salmonella gallinarum (strain 287/91 / NCTC 13346).